A 429-amino-acid chain; its full sequence is Gamma-glutamyl phosphate reductase (429 aa).

This sequence belongs to the gamma-glutamyl phosphate reductase family.

Its subcellular location is the cytoplasm. It carries out the reaction L-glutamate 5-semialdehyde + phosphate + NADP(+) = L-glutamyl 5-phosphate + NADPH + H(+). It functions in the pathway amino-acid biosynthesis; L-proline biosynthesis; L-glutamate 5-semialdehyde from L-glutamate: step 2/2. Catalyzes the NADPH-dependent reduction of L-glutamate 5-phosphate into L-glutamate 5-semialdehyde and phosphate. The product spontaneously undergoes cyclization to form 1-pyrroline-5-carboxylate. The sequence is that of Gamma-glutamyl phosphate reductase from Sphingopyxis alaskensis (strain DSM 13593 / LMG 18877 / RB2256) (Sphingomonas alaskensis).